Consider the following 239-residue polypeptide: Probable transcriptional regulatory protein BC_0539 (239 aa).

Belongs to the TACO1 family. YeeN subfamily.

The protein localises to the cytoplasm. The sequence is that of Probable transcriptional regulatory protein BC_0539 from Bacillus cereus (strain ATCC 14579 / DSM 31 / CCUG 7414 / JCM 2152 / NBRC 15305 / NCIMB 9373 / NCTC 2599 / NRRL B-3711).